A 127-amino-acid chain; its full sequence is Aspartate 1-decarboxylase (127 aa).

Residue Ser-25 is the Schiff-base intermediate with substrate; via pyruvic acid of the active site. Ser-25 carries the pyruvic acid (Ser) modification. Residue Thr-57 participates in substrate binding. Residue Tyr-58 is the Proton donor of the active site. A substrate-binding site is contributed by 73–75 (GAA).

The protein belongs to the PanD family. As to quaternary structure, heterooctamer of four alpha and four beta subunits. Pyruvate is required as a cofactor. In terms of processing, is synthesized initially as an inactive proenzyme, which is activated by self-cleavage at a specific serine bond to produce a beta-subunit with a hydroxyl group at its C-terminus and an alpha-subunit with a pyruvoyl group at its N-terminus.

Its subcellular location is the cytoplasm. The catalysed reaction is L-aspartate + H(+) = beta-alanine + CO2. It functions in the pathway cofactor biosynthesis; (R)-pantothenate biosynthesis; beta-alanine from L-aspartate: step 1/1. Catalyzes the pyruvoyl-dependent decarboxylation of aspartate to produce beta-alanine. The protein is Aspartate 1-decarboxylase of Aliarcobacter butzleri (strain RM4018) (Arcobacter butzleri).